We begin with the raw amino-acid sequence, 138 residues long: Translation initiation factor 2 subunit beta (138 aa).

Belongs to the eIF-2-beta/eIF-5 family. Heterotrimer composed of an alpha, a beta and a gamma chain.

Functionally, eIF-2 functions in the early steps of protein synthesis by forming a ternary complex with GTP and initiator tRNA. The chain is Translation initiation factor 2 subunit beta from Methanococcus maripaludis (strain C5 / ATCC BAA-1333).